The following is a 353-amino-acid chain: Abasic site processing protein HMCES (353 aa).

Catalysis depends on cysteine 2, which acts as the Nucleophile. Residue cysteine 2 is modified to Thiazolidine linkage to a ring-opened DNA abasic site. Glutamate 127 is a catalytic residue. Glycyl lysine isopeptide (Lys-Gly) (interchain with G-Cter in SUMO2) cross-links involve residues lysine 148 and lysine 151. Serine 160 is subject to Phosphoserine. Glycyl lysine isopeptide (Lys-Gly) (interchain with G-Cter in SUMO2) cross-links involve residues lysine 274 and lysine 275. The segment at 292-353 is disordered; sequence TKSPKKEVPD…DEPVAKRPNS (62 aa). Serine 294 is modified (phosphoserine). The segment covering 295-307 has biased composition (basic and acidic residues); that stretch reads PKKEVPDSPKKDA. Residue lysine 305 forms a Glycyl lysine isopeptide (Lys-Gly) (interchain with G-Cter in SUMO2) linkage. Serine 321 carries the phosphoserine modification. The short motif at 332-338 is the PIP-box element; sequence SLLDRWL. Over residues 336 to 353 the composition is skewed to basic and acidic residues; the sequence is RWLKQEKEDEPVAKRPNS. Residues lysine 339 and lysine 342 each participate in a glycyl lysine isopeptide (Lys-Gly) (interchain with G-Cter in SUMO2) cross-link.

The protein belongs to the SOS response-associated peptidase family. Interacts (via PIP-box motif) with PCNA. Ubiquitinated; the covalent HMCES DNA-protein cross-link is ubiquitinated, leading to its degradation by the proteasome.

It localises to the chromosome. With respect to regulation, formation and reversal of DNA-protein cross-link depends on DNA context. Catalyzes formation of the thiazolidine linkage in presence of abasic sites in single-stranded DNA. Mediates the reversal of the thiazolidine cross-link in presence of double stranded DNA. In terms of biological role, sensor of abasic sites in single-stranded DNA (ssDNA) required to preserve genome integrity by promoting error-free repair of abasic sites. Acts as an enzyme that recognizes and binds abasic sites in ssDNA at replication forks and chemically modifies the lesion by forming a covalent cross-link with DNA: forms a stable thiazolidine linkage between a ring-opened abasic site and the alpha-amino and sulfhydryl substituents of its N-terminal catalytic cysteine residue. Promotes error-free repair by protecting abasic sites from translesion synthesis (TLS) polymerases and endonucleases that are error-prone and would generate mutations and double-strand breaks. The HMCES DNA-protein cross-link is then either reversed or degraded. HMCES is able to catalyze the reversal of its thiazolidine cross-link and cycle between a cross-link and a non-cross-linked state depending on DNA context: mediates self-reversal of the thiazolidine cross-link in double stranded DNA, allowing APEX1 to initiate downstream repair of abasic sites. The HMCES DNA-protein cross-link can also be degraded by the SPRTN metalloprotease following unfolding by the BRIP1/FANCJ helicase. Has preference for ssDNA, but can also accommodate double-stranded DNA with 3' or 5' overhang (dsDNA), and dsDNA-ssDNA 3' junction. Plays a protective role during somatic hypermutation of immunoglobulin genes in B-cells: acts via its ability to form covalent cross-links with abasic sites, thereby limiting the accumulation of deletions in somatic hypermutation target regions. Also involved in class switch recombination (CSR) in B-cells independently of the formation of a DNA-protein cross-link: acts by binding and protecting ssDNA overhangs to promote DNA double-strand break repair through the microhomology-mediated alternative-end-joining (Alt-EJ) pathway. Acts as a protease: mediates autocatalytic processing of its N-terminal methionine in order to expose the catalytic cysteine. This Rattus norvegicus (Rat) protein is Abasic site processing protein HMCES.